We begin with the raw amino-acid sequence, 266 residues long: Glucosamine-6-phosphate deaminase (266 aa).

Catalysis depends on D72, which acts as the Proton acceptor; for enolization step. D141 (for ring-opening step) is an active-site residue. Residue H143 is the Proton acceptor; for ring-opening step of the active site. Catalysis depends on E148, which acts as the For ring-opening step.

It belongs to the glucosamine/galactosamine-6-phosphate isomerase family. NagB subfamily. Homohexamer.

The enzyme catalyses alpha-D-glucosamine 6-phosphate + H2O = beta-D-fructose 6-phosphate + NH4(+). It functions in the pathway amino-sugar metabolism; N-acetylneuraminate degradation; D-fructose 6-phosphate from N-acetylneuraminate: step 5/5. With respect to regulation, allosterically activated by N-acetylglucosamine 6-phosphate (GlcNAc6P). Functionally, catalyzes the reversible isomerization-deamination of glucosamine 6-phosphate (GlcN6P) to form fructose 6-phosphate (Fru6P) and ammonium ion. This chain is Glucosamine-6-phosphate deaminase, found in Citrobacter koseri (strain ATCC BAA-895 / CDC 4225-83 / SGSC4696).